We begin with the raw amino-acid sequence, 320 residues long: Ribonuclease Z (320 aa).

Zn(2+) is bound by residues H63, H65, D67, H68, H141, D212, and H270. The active-site Proton acceptor is the D67.

This sequence belongs to the RNase Z family. As to quaternary structure, homodimer. Requires Zn(2+) as cofactor.

It carries out the reaction Endonucleolytic cleavage of RNA, removing extra 3' nucleotides from tRNA precursor, generating 3' termini of tRNAs. A 3'-hydroxy group is left at the tRNA terminus and a 5'-phosphoryl group is left at the trailer molecule.. Its function is as follows. Zinc phosphodiesterase, which displays some tRNA 3'-processing endonuclease activity. Probably involved in tRNA maturation, by removing a 3'-trailer from precursor tRNA. This Lacticaseibacillus casei (strain BL23) (Lactobacillus casei) protein is Ribonuclease Z.